Reading from the N-terminus, the 928-residue chain is Chitin synthase 2 (928 aa).

2 disordered regions span residues 1-45 (MAYN…EAYA) and 110-179 (AYYT…SPAP). Polar residues predominate over residues 17-28 (PSAQPQYDSRSP). Over residues 130-140 (PSHDEPYRPDT) the composition is skewed to basic and acidic residues. 9 helical membrane-spanning segments follow: residues 472–492 (SAFG…YVAL), 570–589 (WLNG…YQLW), 613–633 (LFAW…TASL), 644–664 (TVLG…CFIL), 678–698 (MMMV…SIFL), 723–743 (FFGL…ASFL), 753–773 (CFLQ…IYAF), 854–874 (VTAW…IAGF), and 893–913 (VILW…CWFL).

It belongs to the chitin synthase family. Class I subfamily.

The protein localises to the cell membrane. The catalysed reaction is [(1-&gt;4)-N-acetyl-beta-D-glucosaminyl](n) + UDP-N-acetyl-alpha-D-glucosamine = [(1-&gt;4)-N-acetyl-beta-D-glucosaminyl](n+1) + UDP + H(+). Polymerizes chitin, a structural polymer of the cell wall and septum, by transferring the sugar moiety of UDP-GlcNAc to the non-reducing end of the growing chitin polymer. CHS2 plays a synergistic role to CHS1 in normal yeast cell reproductive growth, even if this role is less predominant than for CHS1. With CHS3, plays an important role in virulence. This chain is Chitin synthase 2, found in Exophiala dermatitidis (Black yeast-like fungus).